The following is a 231-amino-acid chain: Ribosyldihydronicotinamide dehydrogenase [quinone] (231 aa).

FAD is bound by residues His12 and 18–21 (FNGS). Ser80 carries the post-translational modification Phosphoserine. Residue 104–107 (LYWF) participates in FAD binding. 127-129 (FDI) contributes to the substrate binding site. FAD is bound by residues 148-151 (TTGG) and Tyr156. Residues His174 and His178 each coordinate Zn(2+). Glu194 contacts FAD. Ser197 carries the post-translational modification Phosphoserine. Residue Arg201 participates in FAD binding. Position 223 (Cys223) interacts with Zn(2+).

Belongs to the NAD(P)H dehydrogenase (quinone) family. In terms of assembly, homodimer. Zn(2+) is required as a cofactor. FAD serves as cofactor.

It localises to the cytoplasm. The catalysed reaction is 1-(beta-D-ribofuranosyl)-1,4-dihydronicotinamide + a quinone + H(+) = beta-nicotinamide D-riboside + a quinol. The enzyme apparently serves as a quinone reductase in connection with conjugation reactions of hydroquinones involved in detoxification pathways as well as in biosynthetic processes such as the vitamin K-dependent gamma-carboxylation of glutamate residues in prothrombin synthesis. The sequence is that of Ribosyldihydronicotinamide dehydrogenase [quinone] (NQO2) from Pongo abelii (Sumatran orangutan).